Reading from the N-terminus, the 214-residue chain is Predicted GPI-anchored protein 57 (214 aa).

The signal sequence occupies residues 1–18 (MLFTQLIILFTFISQIIC). The segment at 36-101 (RGSSGHSSGG…SSGSSSGSRN (66 aa)) is disordered. The segment covering 42–60 (SSGGGHSSSGSHSSGGGHS) has biased composition (gly residues). Over residues 76–85 (SGSSSGSSSG) the composition is skewed to low complexity. Asn182 is a glycosylation site (N-linked (GlcNAc...) asparagine). A lipid anchor (GPI-anchor amidated glycine) is attached at Gly191. The propeptide at 192–214 (VSLNIPSTHFYVIGLAAAYSIVL) is removed in mature form.

This sequence belongs to the PGA37 family.

It is found in the secreted. The protein resides in the cell membrane. Functionally, predicted GPI-anchored protein which may have a role during host infection. This is Predicted GPI-anchored protein 57 (PGA57) from Candida albicans (strain SC5314 / ATCC MYA-2876) (Yeast).